We begin with the raw amino-acid sequence, 514 residues long: Maltose/maltodextrin transport system permease protein MalF (514 aa).

Residues 1-16 (MDVIKKKHWWQSDQLK) lie on the Cytoplasmic side of the membrane. Residues 17–36 (WSVIGLLGLLVGYLVVLMYV) form a helical membrane-spanning segment. The Periplasmic portion of the chain corresponds to 37 to 39 (QGE). Residues 40 to 57 (YLFAIMTLILSSAGLYIF) traverse the membrane as a helical segment. At 58–69 (ANRKTYAWRYVY) the chain is on the cytoplasmic side. Residues 70–92 (PGLAGMGLFVLFPLVCTIAIAFT) form a helical membrane-spanning segment. At 93–283 (NYSSTNQLTF…QKPFFAIFVW (191 aa)) the chain is on the periplasmic side. Residues 281–505 (FVWTVVFSVL…LLVGALAIVN (225 aa)) enclose the ABC transmembrane type-1 domain. Residues 284–306 (TVVFSVLTVVLTVAVGMVLACLV) form a helical membrane-spanning segment. The Cytoplasmic portion of the chain corresponds to 307–318 (QWEALKGKAIYR). Residues 319–341 (VLLILPYAVPSFISILIFKGLFN) form a helical membrane-spanning segment. At 342 to 369 (QSFGEINMMLSALFGIKPAWFSDPNTAR) the chain is on the periplasmic side. Residues 370-392 (AMVIIVNTWLGYPYMMILCMGLL) form a helical membrane-spanning segment. Topologically, residues 393-412 (KAIPDDLYEASAMDGAGPFQ) are cytoplasmic. Residues 413–435 (NFFKITLPLLIKPLTPLMIASFA) traverse the membrane as a helical segment. At 436 to 483 (FNFNNFVLIQLLTNGGPDRLGTTTPAGYTDLLVSYTYRIAFEGGGGQD) the chain is on the periplasmic side. Residues 484-506 (FGLAAAIATLIFLLVGALAIVNL) form a helical membrane-spanning segment. The Cytoplasmic portion of the chain corresponds to 507 to 514 (KATRMKFD).

This sequence belongs to the binding-protein-dependent transport system permease family. MalFG subfamily. In terms of assembly, the complex is composed of two ATP-binding proteins (MalK), two transmembrane proteins (MalG and MalF) and a solute-binding protein (MalE).

The protein resides in the cell inner membrane. In terms of biological role, part of the ABC transporter complex MalEFGK involved in maltose/maltodextrin import. Probably responsible for the translocation of the substrate across the membrane. The sequence is that of Maltose/maltodextrin transport system permease protein MalF (malF) from Salmonella typhimurium (strain LT2 / SGSC1412 / ATCC 700720).